A 216-amino-acid chain; its full sequence is Eukaryotic translation initiation factor 3 subunit K (216 aa).

Residues 40-202 form the PCI domain; that stretch reads YDLDANLAVL…HIKSKNIAEK (163 aa).

The protein belongs to the eIF-3 subunit K family. In terms of assembly, component of the eukaryotic translation initiation factor 3 (eIF-3) complex.

Its subcellular location is the cytoplasm. Functionally, component of the eukaryotic translation initiation factor 3 (eIF-3) complex, which is involved in protein synthesis of a specialized repertoire of mRNAs and, together with other initiation factors, stimulates binding of mRNA and methionyl-tRNAi to the 40S ribosome. The eIF-3 complex specifically targets and initiates translation of a subset of mRNAs involved in cell proliferation. The chain is Eukaryotic translation initiation factor 3 subunit K from Nematostella vectensis (Starlet sea anemone).